The following is a 751-amino-acid chain: MNNNIAISKENTIKLSFPLVFDTKTTNTSTKEYVETIKEDEKVDLFDPTIDTKLFVKPDRKTKKNDKSDQRDSDIDIIKTKLKSKKKEKSKFRKDEDYDSLKREDNQSPQGAMSSLPFARPEVPAKKMVSNTNTLNKKNVVKSSTKKSKKQTSAKNRELEQNLLVKPENVVIAGPLSVQELAVLLTVSETEIIRSLFLKGIGVTINQILDVSTAKTVGEDLGINIDHVKDSDEESKKLQIHEIDNESLEKRPPVIAIMGHVDHGKTTLLDKIRKTQIAQKEAGGITQKIGAYEVEIDYKDQTKKLTFLDTPGHEAFSGMRSRGVQVTDIAILVVAADDGVKPQTVEAIKYIQAANVPIIVAINKIDKENADIENIKQQLTQYNLIPENWGGDTLMVPISAMKGTNMENLLEMIILVSEIEDLKANTKVKAQGTVLEAHLDRTKGAVATLLVQNGTLRIGDILTAGTSMAKIRGMINSLGEKIEECLPSSPVLIWGLSKLPASGEHFEIFDDEKQAKIAVQKAQEANKENQTIANTISENYTLSNSNTKGVINLIIKTDIQGSAEAIIGSINKIPQDKVQVRVLYASAGEITETDIDFADTSGAIVLAFNTSLATGASKAARHLNVKVKEYDVIYDLLDYIELTIEEITGPEYDKKSLGKAIVQGVFPLAKSFVAGLRVTEGKITKNAHIEVIRQDLVVFDGSITSLKKVKEDIGEAIEDSECGLFVEEFDTWQENDIVQAFELIPKKRKEK.

Residues 86 to 156 (KKEKSKFRKD…KSKKQTSAKN (71 aa)) are disordered. Residues 93–106 (RKDEDYDSLKREDN) are compositionally biased toward basic and acidic residues. The segment covering 129–143 (VSNTNTLNKKNVVKS) has biased composition (low complexity). A tr-type G domain is found at 250 to 423 (KRPPVIAIMG…ILVSEIEDLK (174 aa)). Positions 259–266 (GHVDHGKT) are G1. A GTP-binding site is contributed by 259–266 (GHVDHGKT). Residues 284 to 288 (GITQK) form a G2 region. Residues 309–312 (DTPG) form a G3 region. Residues 309–313 (DTPGH) and 363–366 (NKID) contribute to the GTP site. The tract at residues 363–366 (NKID) is G4. The G5 stretch occupies residues 399-401 (SAM).

This sequence belongs to the TRAFAC class translation factor GTPase superfamily. Classic translation factor GTPase family. IF-2 subfamily.

Its subcellular location is the plastid. It is found in the chloroplast. Functionally, one of the essential components for the initiation of protein synthesis. Protects formylmethionyl-tRNA from spontaneous hydrolysis and promotes its binding to the 30S ribosomal subunits. Also involved in the hydrolysis of GTP during the formation of the 70S ribosomal complex. In Rhodomonas salina (Cryptomonas salina), this protein is Translation initiation factor IF-2, chloroplastic (infB).